Here is a 222-residue protein sequence, read N- to C-terminus: 2-C-methyl-D-erythritol 4-phosphate cytidylyltransferase (222 aa).

This sequence belongs to the IspD/TarI cytidylyltransferase family. IspD subfamily.

It catalyses the reaction 2-C-methyl-D-erythritol 4-phosphate + CTP + H(+) = 4-CDP-2-C-methyl-D-erythritol + diphosphate. It functions in the pathway isoprenoid biosynthesis; isopentenyl diphosphate biosynthesis via DXP pathway; isopentenyl diphosphate from 1-deoxy-D-xylulose 5-phosphate: step 2/6. In terms of biological role, catalyzes the formation of 4-diphosphocytidyl-2-C-methyl-D-erythritol from CTP and 2-C-methyl-D-erythritol 4-phosphate (MEP). The sequence is that of 2-C-methyl-D-erythritol 4-phosphate cytidylyltransferase from Porphyromonas gingivalis (strain ATCC 33277 / DSM 20709 / CIP 103683 / JCM 12257 / NCTC 11834 / 2561).